The sequence spans 264 residues: uncharacterized protein (264 aa).

A helical transmembrane segment spans residues 9–29 (LVISILSLIATLSISFNIYFI).

It localises to the membrane. This is an uncharacterized protein from Ureaplasma parvum serovar 3 (strain ATCC 700970).